The primary structure comprises 108 residues: UPF0145 protein HDEF_1024 (108 aa).

It belongs to the UPF0145 family.

The polypeptide is UPF0145 protein HDEF_1024 (Hamiltonella defensa subsp. Acyrthosiphon pisum (strain 5AT)).